A 522-amino-acid chain; its full sequence is FAD-dependent monooxygenase fsr3 (522 aa).

The segment at 1 to 27 (MKNTQTNGTHPIIDKKPNGTLNGDHQE) is disordered. Arginine 164 contacts FAD. Arginine 245 is a catalytic residue. Residues aspartate 369 and alanine 382 each contribute to the FAD site.

It belongs to the paxM FAD-dependent monooxygenase family. Requires FAD as cofactor.

The protein operates within polyketide biosynthesis. FAD-dependent monooxygenase; part of the gene cluster that mediates the biosynthesis of fusarubins, highly pigmented naphthoquinones responsible for the coloration of the fruiting bodies. The non-reducing polyketide synthase FSR1 is responsible for the condensation of seven acetyl-CoA units to yield a haptaketide. After rings A and B are formed by aldol-type cyclization, the PKS-derived product is released as 6-O-demethylfusarubinaldehyde. Then, two hydroxyl groups at C-5 and C-10 are incorporated by FSR3, and simultaneously hydroxyl groups at C-6 and C-8 are methylated by FSR2. The aldehyde is, on the one hand, reduced by FSR3 to 8-O-methylfusarubin alcohol, which equilibrates mainly with 8-O-methylfusarubin and only small amounts of 8-O-methylnectriafurone. On the other hand, the aldehyde can be oxidized to form 8-O-methylfusarubinic acid, a reaction driven by FSR3 equilibrating with 8-O-methylfusarubinlactone, finally resulting in 8-O-methylanhydrofusarubinlactol after a further reduction step and loss of water. 8-O-Methylfusarubinic acid can also undergo decarboxylation, resulting in 8-O-methyl-13-hydroxynorjavanicin after another hydroxylation step at C-13. Both steps are most likely also accomplished by FSR3. No enzymatic function has been determined so far for either FSR4 and FSR5. Their deletion does not alter the product spectrum, but the possibility that they catalyze specific enzymatic steps during perithecium development cannot be ruled out. FSR4 might possess a regulatory function in the biosynthesis of fusarubins. This chain is FAD-dependent monooxygenase fsr3, found in Gibberella fujikuroi (strain CBS 195.34 / IMI 58289 / NRRL A-6831) (Bakanae and foot rot disease fungus).